We begin with the raw amino-acid sequence, 406 residues long: [Pyruvate dehydrogenase (acetyl-transferring)] kinase isozyme 3, mitochondrial (406 aa).

The 232-residue stretch at 131-362 (IEYKEKFGFD…DAVIYLKALS (232 aa)) folds into the Histidine kinase domain. 247–254 (ELFKNSMR) serves as a coordination point for ATP. N6-succinyllysine is present on Lys-278. Residues Asp-287, 306–307 (ST), and 323–328 (GFGYGL) contribute to the ATP site. The disordered stretch occupies residues 383–406 (TPEADDWSNPSSEPRDASKYKAKQ). Residues 395-406 (EPRDASKYKAKQ) are compositionally biased toward basic and acidic residues.

This sequence belongs to the PDK/BCKDK protein kinase family. In terms of assembly, homodimer. Interacts with the pyruvate dehydrogenase complex subunit DLAT, and is part of the multimeric pyruvate dehydrogenase complex that contains multiple copies of pyruvate dehydrogenase (E1), dihydrolipoamide acetyltransferase (DLAT, E2) and lipoamide dehydrogenase (DLD, E3). In terms of tissue distribution, expressed in heart, skeletal muscle, spinal cord, as well as fetal and adult brain.

It localises to the mitochondrion matrix. The enzyme catalyses L-seryl-[pyruvate dehydrogenase E1 alpha subunit] + ATP = O-phospho-L-seryl-[pyruvate dehydrogenase E1 alpha subunit] + ADP + H(+). With respect to regulation, activated by interaction with DLAT. Inhibited by AZD7545, dichloroacetate and radicicol. Its function is as follows. Inhibits pyruvate dehydrogenase activity by phosphorylation of the E1 subunit PDHA1, and thereby regulates glucose metabolism and aerobic respiration. Can also phosphorylate PDHA2. Decreases glucose utilization and increases fat metabolism in response to prolonged fasting, and as adaptation to a high-fat diet. Plays a role in glucose homeostasis and in maintaining normal blood glucose levels in function of nutrient levels and under starvation. Plays a role in the generation of reactive oxygen species. The protein is [Pyruvate dehydrogenase (acetyl-transferring)] kinase isozyme 3, mitochondrial (PDK3) of Homo sapiens (Human).